The primary structure comprises 423 residues: Cyclin-B2-1 (423 aa).

Residues 1 to 61 (MDRASENRRL…EKSGKEEQKP (61 aa)) are disordered. Basic and acidic residues predominate over residues 49–60 (PMLEKSGKEEQK).

This sequence belongs to the cyclin family. Cyclin AB subfamily. As to quaternary structure, interacts with CDKB2-1. Expressed in the intercalary meristem and the elongation zone of internodes. Expressed in adventitious roots at all nodes under submergence conditions.

In terms of biological role, involved in the control of the cell cycle at the G2/M (mitosis) transition. May activate CDKB2-1 kinase. This chain is Cyclin-B2-1 (CYCB2-1), found in Oryza sativa subsp. indica (Rice).